We begin with the raw amino-acid sequence, 445 residues long: Phosphoglucosamine mutase (445 aa).

S102 functions as the Phosphoserine intermediate in the catalytic mechanism. S102, D241, D243, and D245 together coordinate Mg(2+). Phosphoserine is present on S102.

It belongs to the phosphohexose mutase family. Requires Mg(2+) as cofactor. Activated by phosphorylation.

It catalyses the reaction alpha-D-glucosamine 1-phosphate = D-glucosamine 6-phosphate. Its function is as follows. Catalyzes the conversion of glucosamine-6-phosphate to glucosamine-1-phosphate. The chain is Phosphoglucosamine mutase from Escherichia coli O157:H7.